The following is a 374-amino-acid chain: UPF0496 protein At4g34320 (374 aa).

2 consecutive transmembrane segments (helical) span residues 215–235 (IIFV…AAMA) and 238–258 (PVAA…GKWI).

The protein belongs to the UPF0496 family.

The protein localises to the membrane. The polypeptide is UPF0496 protein At4g34320 (Arabidopsis thaliana (Mouse-ear cress)).